Reading from the N-terminus, the 217-residue chain is Protein GrpE (217 aa).

3 stretches are compositionally biased toward acidic residues: residues 1-28, 136-152, and 204-217; these read MSDD…EGDD, DILD…DPGT, and SEAE…DGDE. Disordered regions lie at residues 1-44, 135-157, and 193-217; these read MSDD…NDPA, DDIL…TDPK, and QVTV…DGDE.

Belongs to the GrpE family. Homodimer.

It localises to the cytoplasm. Participates actively in the response to hyperosmotic and heat shock by preventing the aggregation of stress-denatured proteins, in association with DnaK and GrpE. It is the nucleotide exchange factor for DnaK and may function as a thermosensor. Unfolded proteins bind initially to DnaJ; upon interaction with the DnaJ-bound protein, DnaK hydrolyzes its bound ATP, resulting in the formation of a stable complex. GrpE releases ADP from DnaK; ATP binding to DnaK triggers the release of the substrate protein, thus completing the reaction cycle. Several rounds of ATP-dependent interactions between DnaJ, DnaK and GrpE are required for fully efficient folding. The chain is Protein GrpE from Natronomonas pharaonis (strain ATCC 35678 / DSM 2160 / CIP 103997 / JCM 8858 / NBRC 14720 / NCIMB 2260 / Gabara) (Halobacterium pharaonis).